A 227-amino-acid chain; its full sequence is Superoxide dismutase [Cu-Zn] (227 aa).

The signal sequence occupies residues 1-19; it reads MPKLLPPVVLAGCVVALGA. Residue cysteine 20 is the site of N-palmitoyl cysteine attachment. The S-diacylglycerol cysteine moiety is linked to residue cysteine 20. Residues 23-55 form a disordered region; sequence PQHASSLPGTTPAVWTGSPSPSGAGAAEAAPAA. Residues 39–55 show a composition bias toward low complexity; it reads GSPSPSGAGAAEAAPAA. Residues histidine 103 and histidine 105 each coordinate Cu cation. Residues cysteine 110 and cysteine 221 are joined by a disulfide bond. Zn(2+) is bound at residue aspartate 145. Histidine 182 is a binding site for Cu cation.

The protein belongs to the Cu-Zn superoxide dismutase family. The cofactor is Cu cation. Zn(2+) serves as cofactor.

The protein localises to the cell membrane. The enzyme catalyses 2 superoxide + 2 H(+) = H2O2 + O2. Functionally, destroys radicals which are normally produced within the cells and which are toxic to biological systems. May play a role in favoring mycobacterial survival in phagocytes. The polypeptide is Superoxide dismutase [Cu-Zn] (sodC) (Mycolicibacterium paratuberculosis (strain ATCC BAA-968 / K-10) (Mycobacterium paratuberculosis)).